Reading from the N-terminus, the 368-residue chain is DNA replication and repair protein RecF (368 aa).

30 to 37 (GKNGSGKT) is an ATP binding site.

It belongs to the RecF family.

Its subcellular location is the cytoplasm. Its function is as follows. The RecF protein is involved in DNA metabolism; it is required for DNA replication and normal SOS inducibility. RecF binds preferentially to single-stranded, linear DNA. It also seems to bind ATP. This chain is DNA replication and repair protein RecF, found in Marinomonas sp. (strain MWYL1).